We begin with the raw amino-acid sequence, 470 residues long: Sulfate adenylyltransferase subunit 1 (470 aa).

Residues 22-237 (KEVLRFITCG…LEEVPVKSEE (216 aa)) enclose the tr-type G domain. The interval 31–38 (GSVDDGKS) is G1. GTP is bound at residue 31 to 38 (GSVDDGKS). Residues 89-93 (GITID) form a G2 region. The segment at 110–113 (DTPG) is G3. Residues 110-114 (DTPGH) and 165-168 (NKMD) each bind GTP. The interval 165-168 (NKMD) is G4. A G5 region spans residues 202 to 204 (SAK).

The protein belongs to the TRAFAC class translation factor GTPase superfamily. Classic translation factor GTPase family. CysN/NodQ subfamily. In terms of assembly, heterodimer composed of CysD, the smaller subunit, and CysN.

It catalyses the reaction sulfate + ATP + H(+) = adenosine 5'-phosphosulfate + diphosphate. Its pathway is sulfur metabolism; hydrogen sulfide biosynthesis; sulfite from sulfate: step 1/3. With CysD forms the ATP sulfurylase (ATPS) that catalyzes the adenylation of sulfate producing adenosine 5'-phosphosulfate (APS) and diphosphate, the first enzymatic step in sulfur assimilation pathway. APS synthesis involves the formation of a high-energy phosphoric-sulfuric acid anhydride bond driven by GTP hydrolysis by CysN coupled to ATP hydrolysis by CysD. The protein is Sulfate adenylyltransferase subunit 1 of Methylorubrum populi (strain ATCC BAA-705 / NCIMB 13946 / BJ001) (Methylobacterium populi).